We begin with the raw amino-acid sequence, 516 residues long: GMP synthase [glutamine-hydrolyzing] (516 aa).

The Glutamine amidotransferase type-1 domain occupies 6 to 198 (KVIIVDYGSQ…LFKIAGIKAD (193 aa)). Cys83 acts as the Nucleophile in catalysis. Residues His172 and Glu174 contribute to the active site. Positions 199–391 (WSMSSFCERV…LGLPDFIVWR (193 aa)) constitute a GMPS ATP-PPase domain. 227–233 (SGGIDST) is an ATP binding site.

Homodimer.

It catalyses the reaction XMP + L-glutamine + ATP + H2O = GMP + L-glutamate + AMP + diphosphate + 2 H(+). Its pathway is purine metabolism; GMP biosynthesis; GMP from XMP (L-Gln route): step 1/1. Functionally, catalyzes the synthesis of GMP from XMP. This is GMP synthase [glutamine-hydrolyzing] from Oleidesulfovibrio alaskensis (strain ATCC BAA-1058 / DSM 17464 / G20) (Desulfovibrio alaskensis).